The sequence spans 139 residues: Acidic phospholipase A2 DE-I (139 aa).

The signal sequence occupies residues 1 to 16 (MRTLWIMAVLLLGVEG). Intrachain disulfides connect cysteine 42–cysteine 132, cysteine 44–cysteine 60, cysteine 59–cysteine 111, cysteine 65–cysteine 139, cysteine 66–cysteine 104, cysteine 73–cysteine 97, and cysteine 91–cysteine 102. Residues tyrosine 43, glycine 45, and glycine 47 each coordinate Ca(2+). The active site involves histidine 63. Aspartate 64 contacts Ca(2+). Aspartate 105 is an active-site residue.

The cofactor is Ca(2+). As to expression, expressed by the venom gland.

It localises to the secreted. It carries out the reaction a 1,2-diacyl-sn-glycero-3-phosphocholine + H2O = a 1-acyl-sn-glycero-3-phosphocholine + a fatty acid + H(+). Its function is as follows. Snake venom phospholipase A2 (PLA2) that inhibits the ADP- and collagen-induced human platelet aggregation. Exhibits high hydrolytic activities and preferred the anionic micelles to the zwitterionic micelles. PLA2 catalyzes the calcium-dependent hydrolysis of the 2-acyl groups in 3-sn-phosphoglycerides. This is Acidic phospholipase A2 DE-I from Ovophis okinavensis (Ryukyu Island pit viper).